A 519-amino-acid chain; its full sequence is Cyclic AMP-responsive element-binding protein 3-like protein 1 (519 aa).

The tract at residues 1–60 (MDAVLEPFPADRLFPGSSFLDLGDLNESDFLNNAHFPEHLDHFTENMEDFSNDLFSSFFD) is required for transcriptional activation. The Cytoplasmic segment spans residues 1–374 (MDAVLEPFPA…YKMAATQTGT (374 aa)). A disordered region spans residues 71-98 (LDMELDSPTPGIQAEHSYSLSGDSAPQS). Over residues 86–97 (HSYSLSGDSAPQ) the composition is skewed to polar residues. K184 is covalently cross-linked (Glycyl lysine isopeptide (Lys-Gly) (interchain with G-Cter in SUMO2)). The interval 200-259 (DLVQMPPTPPSSHGSDSDGSQSPRSLPPSSPVRPMARSSTAISTSPLLTAPHKLQGTSGP) is disordered. The segment covering 210–223 (SSHGSDSDGSQSPR) has biased composition (low complexity). The span at 236-246 (RSSTAISTSPL) shows a compositional bias: polar residues. Positions 290-353 (ALKRVRRKIK…RTLLQQLQKL (64 aa)) constitute a bZIP domain. The interval 292-321 (KRVRRKIKNKISAQESRRKKKEYVECLEKK) is basic motif. The tract at residues 332–353 (LWKKVETLENANRTLLQQLQKL) is leucine-zipper. A helical; Signal-anchor for type II membrane protein transmembrane segment spans residues 375 to 395 (CLMVAALCFVLVLGSLVPCLP). The MBTPS2 recognition signature appears at 392–395 (PCLP). Residues 396–519 (EFSSGSQTVK…LGPNTTIKLS (124 aa)) are Lumenal-facing. The MBTPS1 recognition motif lies at 423–426 (RSLL). Residues 484–519 (EAWPKDGGNGTSPDFSHSKEWFHDRDLGPNTTIKLS) are disordered. N-linked (GlcNAc...) asparagine glycosylation occurs at N492. The span at 499–510 (SHSKEWFHDRDL) shows a compositional bias: basic and acidic residues. A glycan (N-linked (GlcNAc...) asparagine) is linked at N513.

Belongs to the bZIP family. ATF subfamily. Interacts with SMAD4, the interaction takes place upon TGFB1 induction and SMAD4 acts as a CREB3L1 coactivator to induce the expression of genes involved in assembly of collagen extracellular matrix. Upon ER stress or DNA damage, translocated to the Golgi apparatus, where it is processed by regulated intramembrane proteolysis (RIP) to release the cytosol-facing N-terminal transcription factor domain. The cleavage is performed sequentially by site-1 and site-2 proteases (S1P/MBTPS1 and S2P/MBTPS2). RIP is induced by TGFB1 and ceramide. In terms of processing, N-glycosylated. Post-translationally, ubiquitinated by HRD1/SYVN1; undergoes 'Lys-48'-linked ubiquitination, followed by rapid proteasomal degradation under normal conditions. Upon ER stress, SYVN1 E3 ubiquitin-protein ligase dissociates from its substrate, ubiquitination does not occur and CREB3L1 is stabilized. Expressed in several tissues, with highest levels in pancreas and prostate. Expressed at relatively lower levels in brain.

It is found in the endoplasmic reticulum membrane. It localises to the nucleus. Functionally, precursor of the transcription factor form (Processed cyclic AMP-responsive element-binding protein 3-like protein 1), which is embedded in the endoplasmic reticulum membrane with N-terminal DNA-binding and transcription activation domains oriented toward the cytosolic face of the membrane. In response to ER stress or DNA damage, transported to the Golgi, where it is cleaved in a site-specific manner by resident proteases S1P/MBTPS1 and S2P/MBTPS2. The released N-terminal cytosolic domain is translocated to the nucleus where it activates transcription of specific target genes involved in the cell-cycle progression inhibition. Its function is as follows. Transcription factor involved in cell type specific DNA damage and unfolded protein response (UPR). Binds the DNA consensus sequence 5'-GTGXGCXGC-3'. Plays a critical role in bone formation through the transcription of COL1A1, and possibly COL1A2, and the secretion of bone matrix proteins. Directly binds to the UPR element (UPRE)-like sequence in an osteoblast-specific COL1A1 promoter region and induces its transcription. Does not regulate COL1A1 in other tissues, such as skin. Required to protect astrocytes from ER stress-induced cell death. In astrocytes, binds to the cAMP response element (CRE) of the BiP/HSPA5 promoter and participate in its transcriptional activation. In astrocytes and osteoblasts, upon DNA damage, inhibits cell-cycle progression after G2/M phase by binding to promoters and activating transcription of genes encoding cell-cycle inhibitors, such as p21/CDKN1A. Required for TGFB1 to activate genes involved in the assembly of collagen extracellular matrix. (Microbial infection) May play a role in limiting virus spread by inhibiting proliferation of virus-infected cells. Upon infection with diverse DNA and RNA viruses, inhibits cell-cycle progression by binding to promoters and activating transcription of genes encoding cell-cycle inhibitors, such as p21/CDKN1A. In Homo sapiens (Human), this protein is Cyclic AMP-responsive element-binding protein 3-like protein 1.